The chain runs to 882 residues: Translation initiation factor IF-2 (882 aa).

Residues 57 to 211 (YIPANKTKDK…KDKSKPKVAT (155 aa)) are disordered. Positions 104-115 (TTSEKQKDKGEQ) are enriched in basic and acidic residues. Positions 199-211 (RHKKDKSKPKVAT) are enriched in basic residues. The tr-type G domain occupies 381–550 (ERPPVVTIMG…LIQAEVLELK (170 aa)). The G1 stretch occupies residues 390–397 (GHVDHGKT). GTP is bound at residue 390–397 (GHVDHGKT). Residues 415-419 (GITQH) form a G2 region. Positions 436–439 (DTPG) are G3. GTP contacts are provided by residues 436–440 (DTPGH) and 490–493 (NKMD). The interval 490-493 (NKMD) is G4. The interval 526 to 528 (SAK) is G5.

This sequence belongs to the TRAFAC class translation factor GTPase superfamily. Classic translation factor GTPase family. IF-2 subfamily.

It is found in the cytoplasm. In terms of biological role, one of the essential components for the initiation of protein synthesis. Protects formylmethionyl-tRNA from spontaneous hydrolysis and promotes its binding to the 30S ribosomal subunits. Also involved in the hydrolysis of GTP during the formation of the 70S ribosomal complex. In Helicobacter hepaticus (strain ATCC 51449 / 3B1), this protein is Translation initiation factor IF-2.